Reading from the N-terminus, the 423-residue chain is Imidazolonepropionase (423 aa).

Fe(3+) is bound by residues histidine 78 and histidine 80. Residues histidine 78 and histidine 80 each coordinate Zn(2+). 4-imidazolone-5-propanoate is bound by residues arginine 87, tyrosine 150, and histidine 183. An N-formimidoyl-L-glutamate-binding site is contributed by tyrosine 150. Histidine 247 is a Fe(3+) binding site. Histidine 247 lines the Zn(2+) pocket. Glutamate 250 is a binding site for 4-imidazolone-5-propanoate. Position 322 (aspartate 322) interacts with Fe(3+). Aspartate 322 contacts Zn(2+). N-formimidoyl-L-glutamate contacts are provided by asparagine 324 and glycine 326. Serine 327 provides a ligand contact to 4-imidazolone-5-propanoate.

The protein belongs to the metallo-dependent hydrolases superfamily. HutI family. The cofactor is Zn(2+). It depends on Fe(3+) as a cofactor.

The protein localises to the cytoplasm. It catalyses the reaction 4-imidazolone-5-propanoate + H2O = N-formimidoyl-L-glutamate. It participates in amino-acid degradation; L-histidine degradation into L-glutamate; N-formimidoyl-L-glutamate from L-histidine: step 3/3. Its function is as follows. Catalyzes the hydrolytic cleavage of the carbon-nitrogen bond in imidazolone-5-propanoate to yield N-formimidoyl-L-glutamate. It is the third step in the universal histidine degradation pathway. This is Imidazolonepropionase from Bacillus cereus (strain ATCC 14579 / DSM 31 / CCUG 7414 / JCM 2152 / NBRC 15305 / NCIMB 9373 / NCTC 2599 / NRRL B-3711).